Reading from the N-terminus, the 196-residue chain is Peptide deformylase (196 aa).

Fe cation is bound by residues C97 and H139. The active site involves E140. H143 is a binding site for Fe cation. The span at 171–187 shows a compositional bias: basic and acidic residues; that stretch reads LDAQEPKRAPHSPHTDA. Positions 171–196 are disordered; it reads LDAQEPKRAPHSPHTDAQKPGAASDL.

Belongs to the polypeptide deformylase family. The cofactor is Fe(2+).

The enzyme catalyses N-terminal N-formyl-L-methionyl-[peptide] + H2O = N-terminal L-methionyl-[peptide] + formate. Removes the formyl group from the N-terminal Met of newly synthesized proteins. Requires at least a dipeptide for an efficient rate of reaction. N-terminal L-methionine is a prerequisite for activity but the enzyme has broad specificity at other positions. The protein is Peptide deformylase of Methylocella silvestris (strain DSM 15510 / CIP 108128 / LMG 27833 / NCIMB 13906 / BL2).